The chain runs to 349 residues: tRNA pseudouridine synthase D (349 aa).

Residue Phe27 coordinates substrate. The active-site Nucleophile is Asp80. Asn129 is a substrate binding site. In terms of domain architecture, TRUD spans 155–303 (GVPNYFGAQR…VEAARRAMLL (149 aa)). Substrate is bound at residue Phe329.

The protein belongs to the pseudouridine synthase TruD family.

The enzyme catalyses uridine(13) in tRNA = pseudouridine(13) in tRNA. Its function is as follows. Responsible for synthesis of pseudouridine from uracil-13 in transfer RNAs. The chain is tRNA pseudouridine synthase D from Escherichia coli O17:K52:H18 (strain UMN026 / ExPEC).